Here is a 328-residue protein sequence, read N- to C-terminus: DNA-directed RNA polymerase subunit alpha 2 (328 aa).

The interval 1 to 234 (MQGSVIEFLK…EQLDAFVDLR (234 aa)) is alpha N-terminal domain (alpha-NTD). The segment at 248–328 (FDPILLRPVD…NWPPASLSED (81 aa)) is alpha C-terminal domain (alpha-CTD).

This sequence belongs to the RNA polymerase alpha chain family. As to quaternary structure, homodimer. The RNAP catalytic core consists of 2 alpha, 1 beta, 1 beta' and 1 omega subunit. When a sigma factor is associated with the core the holoenzyme is formed, which can initiate transcription.

The catalysed reaction is RNA(n) + a ribonucleoside 5'-triphosphate = RNA(n+1) + diphosphate. DNA-dependent RNA polymerase catalyzes the transcription of DNA into RNA using the four ribonucleoside triphosphates as substrates. The sequence is that of DNA-directed RNA polymerase subunit alpha 2 from Psychromonas ingrahamii (strain DSM 17664 / CCUG 51855 / 37).